We begin with the raw amino-acid sequence, 413 residues long: Multifunctional CCA protein (413 aa).

ATP-binding residues include glycine 8 and arginine 11. CTP is bound by residues glycine 8 and arginine 11. Residues aspartate 21 and aspartate 23 each contribute to the Mg(2+) site. 3 residues coordinate ATP: arginine 91, arginine 143, and arginine 146. 3 residues coordinate CTP: arginine 91, arginine 143, and arginine 146. The 102-residue stretch at 232–333 (TGVHVMMVVD…VRFFERTDAL (102 aa)) folds into the HD domain.

Belongs to the tRNA nucleotidyltransferase/poly(A) polymerase family. Bacterial CCA-adding enzyme type 1 subfamily. As to quaternary structure, monomer. Can also form homodimers and oligomers. It depends on Mg(2+) as a cofactor. Requires Ni(2+) as cofactor.

It carries out the reaction a tRNA precursor + 2 CTP + ATP = a tRNA with a 3' CCA end + 3 diphosphate. The catalysed reaction is a tRNA with a 3' CCA end + 2 CTP + ATP = a tRNA with a 3' CCACCA end + 3 diphosphate. Its function is as follows. Catalyzes the addition and repair of the essential 3'-terminal CCA sequence in tRNAs without using a nucleic acid template. Adds these three nucleotides in the order of C, C, and A to the tRNA nucleotide-73, using CTP and ATP as substrates and producing inorganic pyrophosphate. tRNA 3'-terminal CCA addition is required both for tRNA processing and repair. Also involved in tRNA surveillance by mediating tandem CCA addition to generate a CCACCA at the 3' terminus of unstable tRNAs. While stable tRNAs receive only 3'-terminal CCA, unstable tRNAs are marked with CCACCA and rapidly degraded. In Burkholderia multivorans (strain ATCC 17616 / 249), this protein is Multifunctional CCA protein.